A 281-amino-acid polypeptide reads, in one-letter code: ATP phosphoribosyltransferase (281 aa).

This sequence belongs to the ATP phosphoribosyltransferase family. Long subfamily. Equilibrium between an active dimeric form, an inactive hexameric form and higher aggregates. Interconversion between the various forms is largely reversible and is influenced by the natural substrates and inhibitors of the enzyme. Requires Mg(2+) as cofactor.

The protein localises to the cytoplasm. It catalyses the reaction 1-(5-phospho-beta-D-ribosyl)-ATP + diphosphate = 5-phospho-alpha-D-ribose 1-diphosphate + ATP. The protein operates within amino-acid biosynthesis; L-histidine biosynthesis; L-histidine from 5-phospho-alpha-D-ribose 1-diphosphate: step 1/9. Feedback inhibited by histidine. Functionally, catalyzes the condensation of ATP and 5-phosphoribose 1-diphosphate to form N'-(5'-phosphoribosyl)-ATP (PR-ATP). Has a crucial role in the pathway because the rate of histidine biosynthesis seems to be controlled primarily by regulation of HisG enzymatic activity. The protein is ATP phosphoribosyltransferase of Mycolicibacterium gilvum (strain PYR-GCK) (Mycobacterium gilvum (strain PYR-GCK)).